A 640-amino-acid polypeptide reads, in one-letter code: 1-deoxy-D-xylulose-5-phosphate synthase (640 aa).

Residues histidine 78 and 119–121 each bind thiamine diphosphate; that span reads GHS. Residue aspartate 151 participates in Mg(2+) binding. Thiamine diphosphate contacts are provided by residues 152 to 153, asparagine 180, tyrosine 289, and glutamate 371; that span reads GA. Asparagine 180 contributes to the Mg(2+) binding site.

Belongs to the transketolase family. DXPS subfamily. As to quaternary structure, homodimer. It depends on Mg(2+) as a cofactor. Thiamine diphosphate serves as cofactor.

It carries out the reaction D-glyceraldehyde 3-phosphate + pyruvate + H(+) = 1-deoxy-D-xylulose 5-phosphate + CO2. The protein operates within metabolic intermediate biosynthesis; 1-deoxy-D-xylulose 5-phosphate biosynthesis; 1-deoxy-D-xylulose 5-phosphate from D-glyceraldehyde 3-phosphate and pyruvate: step 1/1. In terms of biological role, catalyzes the acyloin condensation reaction between C atoms 2 and 3 of pyruvate and glyceraldehyde 3-phosphate to yield 1-deoxy-D-xylulose-5-phosphate (DXP). The protein is 1-deoxy-D-xylulose-5-phosphate synthase of Bartonella henselae (strain ATCC 49882 / DSM 28221 / CCUG 30454 / Houston 1) (Rochalimaea henselae).